A 392-amino-acid chain; its full sequence is 2-oxoisovalerate dehydrogenase subunit beta, mitochondrial (392 aa).

The transit peptide at 1–50 (MAAVAAFAGWLLRLRAAGADGPWRRLCGAGLSRGFLQSASAYGAAAQRRQ) directs the protein to the mitochondrion. Tyrosine 152 is a thiamine diphosphate binding site. 5 residues coordinate K(+): glycine 178, leucine 180, threonine 181, cysteine 228, and aspartate 231. Lysine 232 carries the post-translational modification N6-acetyllysine. Residue asparagine 233 participates in K(+) binding. Residue lysine 241 is modified to N6-acetyllysine.

As to quaternary structure, heterotetramer of 2 alpha/BCKDHA and 2 beta chains/BCKDHB that forms the branched-chain alpha-keto acid decarboxylase (E1) component of the BCKD complex. The branched-chain alpha-ketoacid dehydrogenase is a large complex composed of three major building blocks E1, E2 and E3. It is organized around E2, a 24-meric cubic core composed of DBT, to which are associated 6 to 12 copies of E1, and approximately 6 copies of the dehydrogenase E3, a DLD dimer. Requires thiamine diphosphate as cofactor.

The protein resides in the mitochondrion matrix. It catalyses the reaction N(6)-[(R)-lipoyl]-L-lysyl-[protein] + 3-methyl-2-oxobutanoate + H(+) = N(6)-[(R)-S(8)-2-methylpropanoyldihydrolipoyl]-L-lysyl-[protein] + CO2. Functionally, together with BCKDHA forms the heterotetrameric E1 subunit of the mitochondrial branched-chain alpha-ketoacid dehydrogenase (BCKD) complex. The BCKD complex catalyzes the multi-step oxidative decarboxylation of alpha-ketoacids derived from the branched-chain amino-acids valine, leucine and isoleucine producing CO2 and acyl-CoA which is subsequently utilized to produce energy. The E1 subunit catalyzes the first step with the decarboxylation of the alpha-ketoacid forming an enzyme-product intermediate. A reductive acylation mediated by the lipoylamide cofactor of E2 extracts the acyl group from the E1 active site for the next step of the reaction. In Bos taurus (Bovine), this protein is 2-oxoisovalerate dehydrogenase subunit beta, mitochondrial (BCKDHB).